We begin with the raw amino-acid sequence, 917 residues long: Nitrate reductase [NADH] 2 (917 aa).

Residues 1 to 72 form a disordered region; it reads MAASVDNRQY…SEDENETHNS (72 aa). Residues 37 to 47 show a composition bias toward polar residues; sequence AHQNQTTNQTV. Residues 57–67 show a composition bias toward acidic residues; it reads DDEDVSSEDEN. Cys191 lines the Mo-molybdopterin pocket. The 76-residue stretch at 542–617 folds into the Cytochrome b5 heme-binding domain; that stretch reads AKMYSMSEVK…LEDYRIGELI (76 aa). Heme-binding residues include His577 and His600. Positions 660 to 772 constitute an FAD-binding FR-type domain; that stretch reads RAKVPVQLVE…KGPLGHVEYL (113 aa). FAD is bound by residues 712 to 715, 729 to 733, Phe734, Phe741, 746 to 748, and Thr799; these read RAYT, VVKIY, and LMS.

It belongs to the nitrate reductase family. In terms of assembly, homodimer. FAD serves as cofactor. Heme is required as a cofactor. It depends on Mo-molybdopterin as a cofactor. As to expression, root, leaf, and shoot.

The enzyme catalyses nitrite + NAD(+) + H2O = nitrate + NADH + H(+). Its function is as follows. Nitrate reductase is a key enzyme involved in the first step of nitrate assimilation in plants, fungi and bacteria. This Arabidopsis thaliana (Mouse-ear cress) protein is Nitrate reductase [NADH] 2 (NIA2).